Reading from the N-terminus, the 586-residue chain is Terminase, large subunit (586 aa).

Positions 1 to 229 (MSTQSNRNAL…TIIWPALYPR (229 aa)) are ATPase activity. The short motif at 58–65 (AFRGIGKS) is the Walker A motif element. The Walker B motif signature appears at 156-161 (IIIADD). The interval 344-429 (HSYHSCSQNT…ESNFGDGMFG (86 aa)) is nuclease activity. Positions 364, 420, and 518 each coordinate Mg(2+). The interval 571-586 (LYWEDDDVNGDRFINW) is involved in prohead binding.

The protein belongs to the Teseptimavirus large terminase family. As to quaternary structure, homopentamer. Interacts with the terminase small subunit; the active complex is probably heterooligomeric. Interacts with the portal protein. It depends on Mg(2+) as a cofactor.

In terms of biological role, the terminase large subunit acts as an ATP driven molecular motor necessary for viral DNA translocation into empty capsids and as an endonuclease that cuts the viral genome at a unique and precise dsDNA sequence to initiate and to end a packaging reaction. The terminase lies at a unique vertex of the procapsid and is composed of two subunits, a small terminase subunit involved in viral DNA recognition (packaging sequence), and a large terminase subunit possessing endonucleolytic and ATPase activities. Both terminase subunits heterooligomerize and are docked on the portal protein to form the packaging machine. The terminase large subunit exhibits endonuclease activity and cleaves the viral genome concatemer. Once the DNA is packaged, the terminase detaches from the connector and gets replaced by the tail to finish maturation of the virion. The polypeptide is Terminase, large subunit (19) (Escherichia coli (Bacteriophage T3)).